A 137-amino-acid polypeptide reads, in one-letter code: Chaperone protein YscB (137 aa).

As to quaternary structure, interacts with SycN to form a complex which specifically binds to YopN.

Its subcellular location is the cytoplasm. The protein resides in the cell inner membrane. In terms of biological role, functions as a specific chaperone for YopN. It could facilitate the secretion and the subsequent translocation of YopN. The sequence is that of Chaperone protein YscB (yscB) from Yersinia pestis.